The chain runs to 328 residues: Fructokinase-2 (328 aa).

The protein belongs to the carbohydrate kinase PfkB family.

The catalysed reaction is D-fructose + ATP = D-fructose 6-phosphate + ADP + H(+). It functions in the pathway glycan biosynthesis; starch biosynthesis. In terms of biological role, may play an important role in maintaining the flux of carbon towards starch formation. This is Fructokinase-2 (FRK2) from Solanum habrochaites (Wild tomato).